The chain runs to 434 residues: Trigger factor 2 (434 aa).

One can recognise a PPIase FKBP-type domain in the interval 164–247 (GDTVTVDYDC…VKKVERIEIL (84 aa)).

It belongs to the FKBP-type PPIase family. Tig subfamily.

Its subcellular location is the cytoplasm. The catalysed reaction is [protein]-peptidylproline (omega=180) = [protein]-peptidylproline (omega=0). Its function is as follows. Involved in protein export. Acts as a chaperone by maintaining the newly synthesized protein in an open conformation. Functions as a peptidyl-prolyl cis-trans isomerase. The protein is Trigger factor 2 of Desulfitobacterium hafniense (strain Y51).